Here is a 316-residue protein sequence, read N- to C-terminus: PDZ and LIM domain protein 3 (316 aa).

Positions 1-84 (MPQNVVLPGP…QLCLKIDRAE (84 aa)) constitute a PDZ domain. Phosphoserine is present on residues serine 18 and serine 93. Position 164 is an omega-N-methylarginine (arginine 164). The LIM zinc-binding domain maps to 244–303 (PLCDKCGSGIVGAVVKARDKYRHPECFVCADCNLNLKQKGYFFVEGELYCETHARARTRP).

In terms of assembly, interacts with ACTN2. Forms a heterodimer with PDLIM4 (via LIM domain).

It localises to the cytoplasm. Its subcellular location is the myofibril. The protein resides in the sarcomere. It is found in the z line. May play a role in the organization of actin filament arrays within muscle cells. The chain is PDZ and LIM domain protein 3 (Pdlim3) from Mus musculus (Mouse).